The following is a 617-amino-acid chain: Regulatory solute carrier protein family 1 member 1 (617 aa).

A compositionally biased stretch (polar residues) spans 1 to 22 (MSSLPTSDGFNHPARSSGQSPD). Disordered regions lie at residues 1-106 (MSSL…EITV), 155-181 (ENQNLSQVSDPQQHEEPGNEQYEVAQQ), and 217-237 (KGNGLPQNVDPPSAKKSIPSS). Composition is skewed to basic and acidic residues over residues 43-52 (SDSDRIEPKA) and 66-83 (SEKKEHLSLQDLSDHASS). Composition is skewed to polar residues over residues 89-103 (TDQSPAMPMQNSSEE) and 155-165 (ENQNLSQVSDP). The tract at residues 410 to 412 (QCP) is involved in post-transcriptional down-regulation of SLC5A1. The 41-residue stretch at 571 to 611 (IFPATDIDRILRAGFTLQEALGALHRVGGNADLALLVLLAK) folds into the UBA domain.

As to quaternary structure, interacts with YRDC. Expressed in small intestine, kidney and brain.

It is found in the cell membrane. It localises to the nucleus. The protein resides in the golgi apparatus. Its subcellular location is the trans-Golgi network. In terms of biological role, mediates transcriptional and post-transcriptional regulation of SLC5A1. Inhibits a dynamin and PKC-dependent exocytotic pathway of SLC5A1. Also involved in transcriptional regulation of SLC22A2. Exhibits glucose-dependent, short-term inhibition of SLC5A1 and SLC22A2 by inhibiting the release of vesicles from the trans-Golgi network. The chain is Regulatory solute carrier protein family 1 member 1 (RSC1A1) from Homo sapiens (Human).